The chain runs to 525 residues: MPEKRVLGIEGTAWNFSAAVFAEDLVCLHSAPYVPPTGGIHPREAAQHHASVASDVIRKALDEAGEKIDAVAFSIGPGLGPSLRIAATTARTLALKLGVPLIGVNHCVAHVEIGRWYTKFADPIVLYASGANTQVLGFLNGKYRIFGETLDIGLGNALDKFARSHNLPHPGGPIIEKMAKDGSYIHLPYTVKGMDLAFSGLMSAAKEATQRGESMEDVCFSFQETAFAMCVEVTERALAHTGKDEVILVGGVGANARLQEMLAKMCEERGAKFMAPPRVYMGDNGAMIAYTGKIMLEAGSTIPIAESVVNPGFRSDQVEVTWRHDAGQLFAPGQSETAERGAEASVNLTDKDVVKTRLAKGYRVPELDRHLIAERTRAEARAISAARRGGVPVPVIRDVTDHEIVMEKLDGDVLKYVMNEEYAKGAGLTVGKLHKAGITHGDLTTSNMIWHNDRVYLIDFGLSQMTEEIEPRGVDLHVLFQTLESTTENPETLKSAFINGYCAAFSEAENVIRREHEIELRGRYL.

Positions 1–322 (MPEKRVLGIE…FRSDQVEVTW (322 aa)) are kae1. Positions 106, 110, and 127 each coordinate Fe cation. L-threonylcarbamoyladenylate is bound by residues 127 to 131 (YASGA), Asp-159, Gly-172, Glu-176, and Asn-255. Fe cation is bound at residue Asp-283. One can recognise a Protein kinase domain in the interval 331-525 (APGQSETAER…HEIELRGRYL (195 aa)). ATP contacts are provided by residues 338–346 (AERGAEASV) and Lys-355. Catalysis depends on Asp-442, which acts as the Proton acceptor; for kinase activity.

In the N-terminal section; belongs to the KAE1 / TsaD family. This sequence in the C-terminal section; belongs to the protein kinase superfamily. Tyr protein kinase family. BUD32 subfamily. Component of the KEOPS complex that consists of Kae1, Bud32, Cgi121 and Pcc1; the whole complex dimerizes. Requires Fe(2+) as cofactor.

It is found in the cytoplasm. The catalysed reaction is L-seryl-[protein] + ATP = O-phospho-L-seryl-[protein] + ADP + H(+). It carries out the reaction L-threonyl-[protein] + ATP = O-phospho-L-threonyl-[protein] + ADP + H(+). The enzyme catalyses L-threonylcarbamoyladenylate + adenosine(37) in tRNA = N(6)-L-threonylcarbamoyladenosine(37) in tRNA + AMP + H(+). Functionally, required for the formation of a threonylcarbamoyl group on adenosine at position 37 (t(6)A37) in tRNAs that read codons beginning with adenine. Is a component of the KEOPS complex that is probably involved in the transfer of the threonylcarbamoyl moiety of threonylcarbamoyl-AMP (TC-AMP) to the N6 group of A37. The Kae1 domain likely plays a direct catalytic role in this reaction. The Bud32 domain probably displays kinase activity that regulates Kae1 function. This is Probable bifunctional tRNA threonylcarbamoyladenosine biosynthesis protein from Methanocorpusculum labreanum (strain ATCC 43576 / DSM 4855 / Z).